Reading from the N-terminus, the 650-residue chain is Chaperone protein DnaK (650 aa).

Thr200 carries the post-translational modification Phosphothreonine; by autocatalysis. Low complexity predominate over residues 611-636; sequence AQQAGAAGAAGAAAEGASAQGGAQPA. Positions 611–650 are disordered; it reads AQQAGAAGAAGAAAEGASAQGGAQPADDVVDADFKEVKKD.

It belongs to the heat shock protein 70 family.

Functionally, acts as a chaperone. This chain is Chaperone protein DnaK, found in Burkholderia mallei (strain NCTC 10247).